The following is a 190-amino-acid chain: Peptidyl-tRNA hydrolase (190 aa).

Position 17 (Tyr-17) interacts with tRNA. His-22 serves as the catalytic Proton acceptor. Positions 67 and 69 each coordinate tRNA.

Belongs to the PTH family. Monomer.

The protein resides in the cytoplasm. The catalysed reaction is an N-acyl-L-alpha-aminoacyl-tRNA + H2O = an N-acyl-L-amino acid + a tRNA + H(+). In terms of biological role, hydrolyzes ribosome-free peptidyl-tRNAs (with 1 or more amino acids incorporated), which drop off the ribosome during protein synthesis, or as a result of ribosome stalling. Its function is as follows. Catalyzes the release of premature peptidyl moieties from peptidyl-tRNA molecules trapped in stalled 50S ribosomal subunits, and thus maintains levels of free tRNAs and 50S ribosomes. The chain is Peptidyl-tRNA hydrolase from Moorella thermoacetica (strain ATCC 39073 / JCM 9320).